The primary structure comprises 1239 residues: Zinc finger and BTB domain-containing protein 40 (1239 aa).

The region spanning 24–87 (CDCTISIGTI…MYTGKLPVGK (64 aa)) is the BTB domain. 3 disordered regions span residues 130–231 (SAPS…TSTE), 687–732 (HLEA…PDPA), and 779–801 (KELD…PKKK). Over residues 136–145 (TFRKEPEKPQ) the composition is skewed to basic and acidic residues. Positions 181–199 (SVSQEMSVNSPTAQESQRN) are enriched in polar residues. Serine 190 carries the post-translational modification Phosphoserine. Residues 200–212 (AETPAETPTTAEA) are compositionally biased toward low complexity. A compositionally biased stretch (basic and acidic residues) spans 687–703 (HLEANNKEDEKAAKEDS). Serine 703 is modified (phosphoserine). Residues 705-719 (PGEQNDQGETGSLPG) show a composition bias toward polar residues. 10 C2H2-type zinc fingers span residues 807 to 830 (VTCD…LTEH), 836 to 858 (FSCE…LRLH), 864 to 887 (FMCK…KKKH), 893 to 915 (YACQ…VRTH), 921 to 944 (YVCR…HTFH), 950 to 973 (YDCK…HEVH), 978 to 1000 (HPCP…VVTH), 1006 to 1029 (FSCG…RTHH), 1046 to 1069 (LQCS…KAEH), and 1075 to 1098 (HECD…KCQH). Lysine 1066 is covalently cross-linked (Glycyl lysine isopeptide (Lys-Gly) (interchain with G-Cter in SUMO2)). A C2H2-type 11; atypical zinc finger spans residues 1104–1127 (FRCLYCAATFRFPGALQHHVTTEH). A C2H2-type 12 zinc finger spans residues 1135 to 1158 (FPCELCGELFTSQAQLDSHLESEH).

It belongs to the krueppel C2H2-type zinc-finger protein family.

The protein localises to the nucleus. In terms of biological role, may be involved in transcriptional regulation. The protein is Zinc finger and BTB domain-containing protein 40 (ZBTB40) of Homo sapiens (Human).